The sequence spans 241 residues: Neuroendocrine secretory protein 55 (241 aa).

The signal sequence occupies residues 1–46 (MDRRSRPQLGRRARHNYNDLCPPIGRRAATALLWLSCSIALLRALA). The interval 71 to 241 (AAQVFPEPPE…KRGAIPIRRH (171 aa)) is disordered. Residues 97 to 125 (EYQEEEFDYESETESESEIESETEFETES) are compositionally biased toward acidic residues. Residues 167–177 (PDASPSRAPPS) show a composition bias toward low complexity. Over residues 182 to 198 (ESPRQGEEPEDKDPRDP) the composition is skewed to basic and acidic residues. Residues 212–221 (QHRCKPKKPT) are compositionally biased toward basic residues.

This sequence belongs to the NESP55 family. In terms of processing, binds keratan sulfate chains. May be proteolytically processed to give rise to a number of active peptides. Highly expressed in adrenal medulla and anterior and posterior pituitary. In the brain, detected in hypothalamus, hippocampus, caudate nucleus, thalamus and, in significantly lower amounts, in the cerebellum.

The protein resides in the cytoplasmic vesicle. Its subcellular location is the secretory vesicle. It is found in the secreted. In Bos taurus (Bovine), this protein is Neuroendocrine secretory protein 55.